Consider the following 342-residue polypeptide: Protein BMEI1586 (342 aa).

Catalysis depends on Ser-90, which acts as the Proton acceptor. Residues 91-92 (GS), Asp-251, and 256-257 (GT) each bind substrate.

Belongs to the proline racemase family. As to quaternary structure, homotetramer.

The enzyme catalyses trans-4-hydroxy-L-proline = cis-4-hydroxy-D-proline. Functionally, in vitro, catalyzes the epimerization of trans-4-hydroxy-L-proline (t4LHyp) to cis-4-hydroxy-D-proline (c4DHyp) and that of trans-3-hydroxy-L-proline (t3LHyp) to cis-3-hydroxy-D-proline (c3DHyp), albeit with very low efficiency. The physiological substrate may be different. Displays neither proline racemase activity nor t3LHyp dehydratase activity. The sequence is that of Protein BMEI1586 from Brucella melitensis biotype 1 (strain ATCC 23456 / CCUG 17765 / NCTC 10094 / 16M).